Consider the following 740-residue polypeptide: Ribosomal protein S6 kinase alpha-3 (740 aa).

The tract at residues 1-26 (MPLAQLADPWQKMAVESPSDSAENGQ) is disordered. Residues 68–327 (FELLKVLGQG…VEEIKRHSFF (260 aa)) enclose the Protein kinase 1 domain. Residues 74–82 (LGQGSFGKV) and Lys-100 each bind ATP. The active-site Proton acceptor is the Asp-193. At Ser-227 the chain carries Phosphoserine; by PDPK1. Residues 328 to 397 (STIDWNKLYR…VAITSDDESQ (70 aa)) form the AGC-kinase C-terminal domain. Phosphothreonine is present on Thr-365. Phosphoserine is present on residues Ser-369 and Ser-375. Ser-386 carries the phosphoserine; by autocatalysis and MAPKAPK2 modification. A Phosphoserine modification is found at Ser-415. In terms of domain architecture, Protein kinase 2 spans 422–679 (YEVKEDIGVG…AALVLRHPWI (258 aa)). Residues 428-436 (IGVGSYSVC) and Lys-451 each bind ATP. Position 529 is a phosphotyrosine; by FGFR3 (Tyr-529). Catalysis depends on Asp-539, which acts as the Proton acceptor. Phosphoserine is present on residues Ser-556 and Ser-715.

It belongs to the protein kinase superfamily. AGC Ser/Thr protein kinase family. S6 kinase subfamily. As to quaternary structure, forms a complex with either MAPK1/ERK2 or MAPK3/ERK1 in quiescent cells. Transiently dissociates following mitogenic stimulation. Interacts with NFATC4, ETV1/ER81 and FGFR1. Mg(2+) is required as a cofactor. Post-translationally, activated by phosphorylation at Ser-227 by PDPK1. Autophosphorylated on Ser-386, as part of the activation process. May be phosphorylated at Thr-365 and Ser-369 by MAPK1/ERK2 and MAPK3/ERK1. Can also be activated via phosphorylation at Ser-386 by MAPKAPK2. In terms of processing, N-terminal myristoylation results in an activated kinase in the absence of added growth factors. In terms of tissue distribution, intestine, thymus, lung, heart and brain.

It is found in the nucleus. The protein resides in the cytoplasm. It carries out the reaction L-seryl-[protein] + ATP = O-phospho-L-seryl-[protein] + ADP + H(+). It catalyses the reaction L-threonyl-[protein] + ATP = O-phospho-L-threonyl-[protein] + ADP + H(+). Upon extracellular signal or mitogen stimulation, phosphorylated at Thr-577 in the C-terminal kinase domain (CTKD) by MAPK1/ERK2 and MAPK3/ERK1. The activated CTKD then autophosphorylates Ser-386, allowing binding of PDPK1, which in turn phosphorylates Ser-227 in the N-terminal kinase domain (NTDK) leading to the full activation of the protein and subsequent phosphorylation of the substrates by the NTKD. Serine/threonine-protein kinase that acts downstream of ERK (MAPK1/ERK2 and MAPK3/ERK1) signaling and mediates mitogenic and stress-induced activation of the transcription factors CREB1, ETV1/ER81 and NR4A1/NUR77, regulates translation through RPS6 and EIF4B phosphorylation, and mediates cellular proliferation, survival, and differentiation by modulating mTOR signaling and repressing pro-apoptotic function of BAD and DAPK1. In fibroblast, is required for EGF-stimulated phosphorylation of CREB1 and histone H3 at 'Ser-10', which results in the subsequent transcriptional activation of several immediate-early genes. In response to mitogenic stimulation (EGF and PMA), phosphorylates and activates NR4A1/NUR77 and ETV1/ER81 transcription factors and the cofactor CREBBP. Upon insulin-derived signal, acts indirectly on the transcription regulation of several genes by phosphorylating GSK3B at 'Ser-9' and inhibiting its activity. Phosphorylates RPS6 in response to serum or EGF via an mTOR-independent mechanism and promotes translation initiation by facilitating assembly of the preinitiation complex. In response to insulin, phosphorylates EIF4B, enhancing EIF4B affinity for the EIF3 complex and stimulating cap-dependent translation. Is involved in the mTOR nutrient-sensing pathway by directly phosphorylating TSC2 at 'Ser-1798', which potently inhibits TSC2 ability to suppress mTOR signaling, and mediates phosphorylation of RPTOR, which regulates mTORC1 activity and may promote rapamycin-sensitive signaling independently of the PI3K/AKT pathway. Mediates cell survival by phosphorylating the pro-apoptotic proteins BAD and DAPK1 and suppressing their pro-apoptotic function. Promotes the survival of hepatic stellate cells by phosphorylating CEBPB in response to the hepatotoxin carbon tetrachloride (CCl4). Is involved in cell cycle regulation by phosphorylating the CDK inhibitor CDKN1B, which promotes CDKN1B association with 14-3-3 proteins and prevents its translocation to the nucleus and inhibition of G1 progression. In LPS-stimulated dendritic cells, is involved in TLR4-induced macropinocytosis, and in myeloma cells, acts as effector of FGFR3-mediated transformation signaling, after direct phosphorylation at Tyr-529 by FGFR3. Negatively regulates EGF-induced MAPK1/3 phosphorylation via phosphorylation of SOS1. Phosphorylates SOS1 at 'Ser-1134' and 'Ser-1161' that create YWHAB and YWHAE binding sites and which contribute to the negative regulation of MAPK1/3 phosphorylation. Phosphorylates EPHA2 at 'Ser-897', the RPS6KA-EPHA2 signaling pathway controls cell migration. Acts as a regulator of osteoblast differentiation by mediating phosphorylation of ATF4, thereby promoting ATF4 transactivation activity. This chain is Ribosomal protein S6 kinase alpha-3 (Rps6ka3), found in Mus musculus (Mouse).